The primary structure comprises 89 residues: Small ribosomal subunit protein uS15 (89 aa).

Basic and acidic residues predominate over residues 1-10 (MSITAEKKQE). The segment at 1 to 24 (MSITAEKKQEVIQSNARAEGDTGS) is disordered.

Belongs to the universal ribosomal protein uS15 family. As to quaternary structure, part of the 30S ribosomal subunit. Forms a bridge to the 50S subunit in the 70S ribosome, contacting the 23S rRNA.

Its function is as follows. One of the primary rRNA binding proteins, it binds directly to 16S rRNA where it helps nucleate assembly of the platform of the 30S subunit by binding and bridging several RNA helices of the 16S rRNA. Functionally, forms an intersubunit bridge (bridge B4) with the 23S rRNA of the 50S subunit in the ribosome. The sequence is that of Small ribosomal subunit protein uS15 from Novosphingobium aromaticivorans (strain ATCC 700278 / DSM 12444 / CCUG 56034 / CIP 105152 / NBRC 16084 / F199).